A 460-amino-acid chain; its full sequence is DNA repair protein RAD57 (460 aa).

125–132 (GESSTGKS) serves as a coordination point for ATP.

The protein belongs to the RecA family.

It localises to the nucleus. Its function is as follows. Participates in the repair of X-ray-induced damage to DNA and in meiosis. It may act in part by stabilizing a repair complex of other RAD genes. This Saccharomyces cerevisiae (strain ATCC 204508 / S288c) (Baker's yeast) protein is DNA repair protein RAD57 (RAD57).